Consider the following 437-residue polypeptide: GTPase Obg (437 aa).

Residues 2–160 (SLFLDTARIE…KILLLELRVL (159 aa)) enclose the Obg domain. In terms of domain architecture, OBG-type G spans 161–338 (ADVGLVGFPS…LLARTSELLA (178 aa)). Residues 167–174 (GFPSVGKS), 192–196 (FTTIT), 214–217 (DMPG), 284–287 (NKMD), and 319–321 (SGL) contribute to the GTP site. Residues S174 and T194 each contribute to the Mg(2+) site. Residues 359 to 437 (GFEEEEKPFK…IQKFEFEFVD (79 aa)) form the OCT domain.

The protein belongs to the TRAFAC class OBG-HflX-like GTPase superfamily. OBG GTPase family. As to quaternary structure, monomer. The cofactor is Mg(2+).

The protein resides in the cytoplasm. Its function is as follows. An essential GTPase which binds GTP, GDP and possibly (p)ppGpp with moderate affinity, with high nucleotide exchange rates and a fairly low GTP hydrolysis rate. Plays a role in control of the cell cycle, stress response, ribosome biogenesis and in those bacteria that undergo differentiation, in morphogenesis control. This is GTPase Obg from Lactococcus lactis subsp. lactis (strain IL1403) (Streptococcus lactis).